Here is a 429-residue protein sequence, read N- to C-terminus: Glycine betaine monooxygenase oxygenase subunit (429 aa).

The Rieske domain occupies 56-163 (WLIAGMTCEI…VKTAGGYIFI (108 aa)). [2Fe-2S] cluster is bound by residues cysteine 98, histidine 100, cysteine 118, and histidine 121. Fe cation-binding residues include histidine 217 and histidine 222.

It belongs to the bacterial ring-hydroxylating dioxygenase alpha subunit family. In terms of assembly, the system is composed of an oxygenase subunit (GbcA) and a reductase subunit (GbcB). The cofactor is [2Fe-2S] cluster. Fe cation is required as a cofactor.

The catalysed reaction is glycine betaine + NADH + O2 + H(+) = N,N-dimethylglycine + formaldehyde + NAD(+) + H2O. Involved in degradation of glycine betaine. Part of a Rieske-type oxygenase system that catalyzes the conversion of glycine betaine (GB) to dimethylglycine (DMG). This subunit is the terminal oxygenase component of the system. Required for growth on choline and GB, but not for growth on DMG. The protein is Glycine betaine monooxygenase oxygenase subunit of Pseudomonas aeruginosa (strain ATCC 15692 / DSM 22644 / CIP 104116 / JCM 14847 / LMG 12228 / 1C / PRS 101 / PAO1).